Reading from the N-terminus, the 359-residue chain is Peptide chain release factor 1 (359 aa).

Position 235 is an N5-methylglutamine (Gln-235). The disordered stretch occupies residues 285–305 (KRDSEISQMRKSQIGSGDRSE). Residues 290–299 (ISQMRKSQIG) are compositionally biased toward polar residues.

The protein belongs to the prokaryotic/mitochondrial release factor family. Post-translationally, methylated by PrmC. Methylation increases the termination efficiency of RF1.

The protein resides in the cytoplasm. Functionally, peptide chain release factor 1 directs the termination of translation in response to the peptide chain termination codons UAG and UAA. The chain is Peptide chain release factor 1 from Ehrlichia canis (strain Jake).